The chain runs to 923 residues: Transportin-3 (923 aa).

M1 carries the N-acetylmethionine modification. S74 carries the post-translational modification Phosphoserine. A phosphothreonine mark is found at H242 and T896.

In terms of assembly, interacts with (GTP-bound) Ran. Interacts with (phosphorylated) SFRS1 and SFRS2; leading to their nuclear import. Interacts with NUP62. Interacts with RBM4. Interacts with CPSF6, promoting its nuclear import.

Its subcellular location is the nucleus envelope. The protein localises to the cytoplasm. Its function is as follows. Importin, which transports target proteins into the nucleus. Specifically mediates the nuclear import of splicing factor serine/arginine (SR) proteins, such as RBM4, SFRS1 and SFRS2, by recognizing phosphorylated SR domains. Also mediates the nuclear import of serine/arginine (SR) protein CPSF6, independently of CPSF6 phosphorylation. The nuclear import process is regulated by the small GTPase Ran that partitions between cytoplasm and nucleus in the predominantly GDP- and GTP-bound form, respectively. Importin associates with target cargo proteins in the cytoplasm, and the competitive binding of GTP-bound Ran induces the release of cargos in the nucleus. The sequence is that of Transportin-3 from Mus musculus (Mouse).